We begin with the raw amino-acid sequence, 382 residues long: O-methyltransferase okaF (382 aa).

Residues E249 and R287 each contribute to the S-adenosyl-L-methionine site. H291 functions as the Proton acceptor in the catalytic mechanism.

Belongs to the class I-like SAM-binding methyltransferase superfamily. Cation-independent O-methyltransferase family.

The catalysed reaction is 3-desmethyl okaramine B + S-adenosyl-L-methionine = okaramine B + S-adenosyl-L-homocysteine + H(+). Its pathway is alkaloid biosynthesis. Its function is as follows. O-methyltransferase; part of the gene cluster that mediates the biosynthesis of okaramine B, a prenylated indole alkaloid that possesses an unusual octacyclic ring system, including a four-membered azetidine ring and an eight-membered azocine ring, and that exhibits insecticidal activity against silkworm larvae. Within the pathway, okaF catalyzes the last step which is the methylation of 3-desmethyl okaramine B to produce okaramine B. With okaG, OkaF is also able to produce okaramine D from okaramine E. The biosynthesis begins with the NRPS okaA that condenses two tryptophan molecules into cyclo(L-Trp-L-Trp). Prenylation by the prenyltransferase okaC then leads to the formation of cyclo(N8-(alpha,alpha-dimethylallyl)-L-Trp-6a-(alpha,alpha-dime-thylallyl)-L-Trp). This is followed by indole 2,3-epoxidation by the FAD-dependent monooxygenase okaB to facilitate the formation of the hexahydropyrrolo[2,3-b]indole (HPI) moiety of okaramine C. The cytochrome P450 monooxygenase okaD then likely catalyzes formation of the eight-membered ring of okaramine A. The dioxygenase okaE further forms the unusual 2-dimethyl-3-methyl-azetidine ring to yield 12-deshydroxyl okaramine E, as well as the hydroxylation of 12-deshydroxyl okaramine E to produce okaramine E. The cytochrome P450 monoxygenase okaG converts 12-deshydroxyl okaramine E into 3-desmethyl okaramine B which is further methylated by the methyltransferase okaF into okaramine B. In a shunt pathway, okaG and okaF together are also able to convert okaramine E into okaramine D. Okaramine H is produced by nonenzymatic conversion from okaramine A. The chain is O-methyltransferase okaF from Penicillium ochrochloron.